Here is a 353-residue protein sequence, read N- to C-terminus: NADH-quinone oxidoreductase subunit H (353 aa).

9 helical membrane passes run 8–28 (LLVY…IFIW), 75–95 (GVFW…FAAI), 108–128 (IGIL…FMAG), 148–168 (VSYE…TGSL), 179–199 (VPFI…AMAE), 229–249 (LFYL…TTLF), 258–278 (LHPV…IIWV), 297–317 (FLLP…LIAP), and 319–339 (INTA…VLLF).

This sequence belongs to the complex I subunit 1 family. In terms of assembly, NDH-1 is composed of 14 different subunits. Subunits NuoA, H, J, K, L, M, N constitute the membrane sector of the complex.

It localises to the cell membrane. It catalyses the reaction a quinone + NADH + 5 H(+)(in) = a quinol + NAD(+) + 4 H(+)(out). NDH-1 shuttles electrons from NADH, via FMN and iron-sulfur (Fe-S) centers, to quinones in the respiratory chain. The immediate electron acceptor for the enzyme in this species is believed to be ubiquinone. Couples the redox reaction to proton translocation (for every two electrons transferred, four hydrogen ions are translocated across the cytoplasmic membrane), and thus conserves the redox energy in a proton gradient. This subunit may bind ubiquinone. The protein is NADH-quinone oxidoreductase subunit H of Dehalococcoides mccartyi (strain CBDB1).